Consider the following 386-residue polypeptide: Cytochrome b (386 aa).

4 helical membrane-spanning segments follow: residues 32–52 (LGSLLGLCLVIQICTGIFLAM), 76–98 (WFIRYAHANGASFFFICMYIHIG), 113–133 (VWNVGVIIFVLTMAAAFLGYC), and 179–199 (FFAFHYLVPFIIAAFVIMHFM). Residues H82 and H96 each coordinate heme b. Positions 183 and 197 each coordinate heme b. Position 202 (H202) interacts with a ubiquinone. The next 4 membrane-spanning stretches (helical) occupy residues 225–245 (FIFKDLITVFVFLFFFSLFVF), 289–309 (LLGVLAMFGAILILLVLPITD), 321–341 (FSKFFFFLFIANFVLLGHLGE), and 348–368 (FVVMGQIATVIYFAYFLVIVP).

The protein belongs to the cytochrome b family. In terms of assembly, fungal cytochrome b-c1 complex contains 10 subunits; 3 respiratory subunits, 2 core proteins and 5 low-molecular weight proteins. Cytochrome b-c1 complex is a homodimer. Heme b is required as a cofactor.

It is found in the mitochondrion inner membrane. Its function is as follows. Component of the ubiquinol-cytochrome c reductase complex (complex III or cytochrome b-c1 complex) that is part of the mitochondrial respiratory chain. The b-c1 complex mediates electron transfer from ubiquinol to cytochrome c. Contributes to the generation of a proton gradient across the mitochondrial membrane that is then used for ATP synthesis. The protein is Cytochrome b (COB) of Kluyveromyces lactis (strain ATCC 8585 / CBS 2359 / DSM 70799 / NBRC 1267 / NRRL Y-1140 / WM37) (Yeast).